A 495-amino-acid polypeptide reads, in one-letter code: Thiosulfate sulfurtransferase/rhodanese-like domain-containing protein 2 (495 aa).

Phosphoserine is present on serine 268. The Rhodanese domain maps to 300 to 395 (EQGNTIILDC…YLEEFPDGFY (96 aa)). Cysteine 354 serves as the catalytic Cysteine persulfide intermediate.

This is Thiosulfate sulfurtransferase/rhodanese-like domain-containing protein 2 (Tstd2) from Mus musculus (Mouse).